Consider the following 359-residue polypeptide: Elongation factor Ts 1, mitochondrial (359 aa).

Residues 323–341 (GKAAPAPKAEEPAAVAPAK) are compositionally biased toward low complexity. The tract at residues 323–345 (GKAAPAPKAEEPAAVAPAKADAE) is disordered.

This sequence belongs to the EF-Ts family.

Its subcellular location is the mitochondrion. Its function is as follows. Associates with the EF-Tu.GDP complex and induces the exchange of GDP to GTP. It remains bound to the aminoacyl-tRNA.EF-Tu.GTP complex up to the GTP hydrolysis stage on the ribosome. The polypeptide is Elongation factor Ts 1, mitochondrial (Thalassiosira pseudonana (Marine diatom)).